The chain runs to 330 residues: GTPase Obg (330 aa).

An Obg domain is found at 1–159 (MHFIDEVKIY…MWIHLSLKLL (159 aa)). Residues 160 to 327 (SDVGLVGLPN…IVKLALETIK (168 aa)) enclose the OBG-type G domain. Residues 166 to 173 (GLPNAGKS), 191 to 195 (FTTLV), 212 to 215 (DIPG), 279 to 282 (NKCD), and 308 to 310 (STC) contribute to the GTP site. Mg(2+) is bound by residues serine 173 and threonine 193.

The protein belongs to the TRAFAC class OBG-HflX-like GTPase superfamily. OBG GTPase family. As to quaternary structure, monomer. The cofactor is Mg(2+).

It is found in the cytoplasm. Its function is as follows. An essential GTPase which binds GTP, GDP and possibly (p)ppGpp with moderate affinity, with high nucleotide exchange rates and a fairly low GTP hydrolysis rate. Plays a role in control of the cell cycle, stress response, ribosome biogenesis and in those bacteria that undergo differentiation, in morphogenesis control. The protein is GTPase Obg of Rickettsia conorii (strain ATCC VR-613 / Malish 7).